A 262-amino-acid chain; its full sequence is Protein BcsX (262 aa).

It functions in the pathway glycan metabolism; bacterial cellulose biosynthesis. The chain is Protein BcsX (bcsX) from Komagataeibacter xylinus (Gluconacetobacter xylinus).